A 171-amino-acid chain; its full sequence is Transcriptional repressor NrdR (171 aa).

The segment at 3-34 (CPFCGDPNTQVADTRENEGGEVVRRRRRCPKC) is a zinc-finger region. The ATP-cone domain maps to 49-139 (PHIVKRNGNR…VYRNFADVDE (91 aa)). Residues 148–171 (KARPKRNRPAEPPEPTSENDLFRS) are disordered.

This sequence belongs to the NrdR family. Zn(2+) is required as a cofactor.

Functionally, negatively regulates transcription of bacterial ribonucleotide reductase nrd genes and operons by binding to NrdR-boxes. In Aromatoleum aromaticum (strain DSM 19018 / LMG 30748 / EbN1) (Azoarcus sp. (strain EbN1)), this protein is Transcriptional repressor NrdR.